Consider the following 813-residue polypeptide: MPSIRAPAAKKTTTLTVAVKCRPLMEKERGRDIVRVNNSKEVVVLDPDLSKDYLDRIQNRTKEKKYCFDHAFGPESTNKNVYRSMSSVISSVVHGLNATVFAYGSTGSGKTYTMVGTRSDPGLMVLSLNTIFDMIKSDKSSDEFEVTCSYLEVYNEVIYDLLEKSSGHLELREDPEQGIVVAGLRSIKVHSADRILELLNLGNSRRKTESTEMNGTSSRSHAVLEIAVKRRQKNQNQVMRGKLALVDLAGSERAAETNNGGQKLRDGANINRSLLALANCINALGKQHKKGLAYVPYRNSKLTRILKDGLSGNSQTVMVATISPADSQYHHTVNTLKYADRAKEIKTHIQKNIGTIDTHMSDYQRMIDNLQSEVSQLKTQLAEKESQLSIKPFERGVERELSWLDGLSHQISENVQDRINLQKALFELEETNLRNRTELQHLDDAIAKQATEKDVVEALSSRRQVILDNIRDNDEAGVNYQRDIEENEKHRCELQDMLNEAINNNGNKTYLHILNQYKLLGMGNTELQFEMAMRDQIIYNQREAQRNLWNLLMGLGVEEKQVFDLAAKQGITIEDWSSIALFPGLPYRKQTPSFIPANIPFVGHSYSKSSCTFQSYQDPSSKGQQWAPTPTLCREEHHSSYYFMRQEPPAFVNLRKSHDGWVGGSRPASRIDTGGNHRRVSYPQTVNNSSPRMASGPTFYQTPQREMLLNTTSPYSSPRVGLINGATTPSVQPFYGSPRAVTVRNGSYNTPLAPAAVSTKGARNQQRVFGTSPLSGTKGVKNSSYGQNSHTKLYRGGGTKGHSKGNNTQRQHQ.

One can recognise a Kinesin motor domain in the interval 14–345; sequence TLTVAVKCRP…LKYADRAKEI (332 aa). 104-111 contributes to the ATP binding site; the sequence is GSTGSGKT. A coiled-coil region spans residues 349–391; sequence IQKNIGTIDTHMSDYQRMIDNLQSEVSQLKTQLAEKESQLSIK. Disordered regions lie at residues 664–694 and 756–813; these read GSRP…PRMA and AVST…RQHQ. 3 stretches are compositionally biased toward polar residues: residues 682–694, 761–791, and 804–813; these read YPQT…PRMA, GARN…NSHT, and KGNNTQRQHQ.

Belongs to the TRAFAC class myosin-kinesin ATPase superfamily. Kinesin family. KIN-8 subfamily.

This Arabidopsis thaliana (Mouse-ear cress) protein is Kinesin-like protein KIN-8B.